The primary structure comprises 78 residues: TP53-regulated inhibitor of apoptosis 1 (78 aa).

Residues 1–52 (MNSVGEECTDMKREYDQCFNRWFAEKFLKGECSGDPCTELFRRYRDCVQKAI) are a coiled coil. In terms of domain architecture, CHCH spans 5–55 (GEECTDMKREYDQCFNRWFAEKFLKGECSGDPCTELFRRYRDCVQKAIKDK). Short sequence motifs (cx9C motif) lie at residues 8–18 (CTDMKREYDQC) and 37–47 (CTELFRRYRDC). Intrachain disulfides connect Cys8–Cys47 and Cys18–Cys37.

This sequence belongs to the TRIAP1/MDM35 family. Monomer. Forms a complex with prelid1 in the mitochondrion intermembrane space. Interacts with prelid3a. Expressed in the developing pronephros.

The protein resides in the mitochondrion. The protein localises to the mitochondrion intermembrane space. It carries out the reaction a 1,2-diacyl-sn-glycero-3-phosphate(in) = a 1,2-diacyl-sn-glycero-3-phosphate(out). Its function is as follows. Involved in the modulation of the mitochondrial apoptotic pathway by ensuring the accumulation of cardiolipin (CL) in mitochondrial membranes. The triap1:prelid1 complex probably functions as a phosphatidic acid (PA) transporter across the mitochondrion intermembrane space to provide PA for cardiolipin CL synthesis in the inner membrane. Likewise, the triap1:prelid3a complex mediates the transfer of phosphatidic acid (PA) between liposomes (in vitro) and probably functions as a PA transporter across the mitochondrion intermembrane space (in vivo). Mediates cell survival by inhibiting activation of caspase-9 which prevents induction of apoptosis. Required for pronephros development; probably involved at an early stage in the formation of pronephric components derived from the somatic layer. This chain is TP53-regulated inhibitor of apoptosis 1, found in Xenopus tropicalis (Western clawed frog).